The sequence spans 227 residues: Cytochrome c oxidase subunit 2 (227 aa).

Residues 1-14 (MAYPFQLGLQDATS) are Mitochondrial intermembrane-facing. The chain crosses the membrane as a helical span at residues 15-45 (PIMEELMNFHDHTLMIVFLISTLVLYIISLM). Residues 46–59 (LTTKLTHTSTMDAQ) are Mitochondrial matrix-facing. The helical transmembrane segment at 60–87 (EVETIWTILPAVILILIALPSLRILYMM) threads the bilayer. Residues 88 to 227 (DEINNPALTV…YFENWSASMI (140 aa)) are Mitochondrial intermembrane-facing. His161, Cys196, Glu198, Cys200, His204, and Met207 together coordinate Cu cation. Position 198 (Glu198) interacts with Mg(2+). Tyr218 carries the phosphotyrosine modification.

The protein belongs to the cytochrome c oxidase subunit 2 family. Component of the cytochrome c oxidase (complex IV, CIV), a multisubunit enzyme composed of 14 subunits. The complex is composed of a catalytic core of 3 subunits MT-CO1, MT-CO2 and MT-CO3, encoded in the mitochondrial DNA, and 11 supernumerary subunits COX4I, COX5A, COX5B, COX6A, COX6B, COX6C, COX7A, COX7B, COX7C, COX8 and NDUFA4, which are encoded in the nuclear genome. The complex exists as a monomer or a dimer and forms supercomplexes (SCs) in the inner mitochondrial membrane with NADH-ubiquinone oxidoreductase (complex I, CI) and ubiquinol-cytochrome c oxidoreductase (cytochrome b-c1 complex, complex III, CIII), resulting in different assemblies (supercomplex SCI(1)III(2)IV(1) and megacomplex MCI(2)III(2)IV(2)). Found in a complex with TMEM177, COA6, COX18, COX20, SCO1 and SCO2. Interacts with TMEM177 in a COX20-dependent manner. Interacts with COX20. Interacts with COX16. It depends on Cu cation as a cofactor.

The protein localises to the mitochondrion inner membrane. It carries out the reaction 4 Fe(II)-[cytochrome c] + O2 + 8 H(+)(in) = 4 Fe(III)-[cytochrome c] + 2 H2O + 4 H(+)(out). Functionally, component of the cytochrome c oxidase, the last enzyme in the mitochondrial electron transport chain which drives oxidative phosphorylation. The respiratory chain contains 3 multisubunit complexes succinate dehydrogenase (complex II, CII), ubiquinol-cytochrome c oxidoreductase (cytochrome b-c1 complex, complex III, CIII) and cytochrome c oxidase (complex IV, CIV), that cooperate to transfer electrons derived from NADH and succinate to molecular oxygen, creating an electrochemical gradient over the inner membrane that drives transmembrane transport and the ATP synthase. Cytochrome c oxidase is the component of the respiratory chain that catalyzes the reduction of oxygen to water. Electrons originating from reduced cytochrome c in the intermembrane space (IMS) are transferred via the dinuclear copper A center (CU(A)) of subunit 2 and heme A of subunit 1 to the active site in subunit 1, a binuclear center (BNC) formed by heme A3 and copper B (CU(B)). The BNC reduces molecular oxygen to 2 water molecules using 4 electrons from cytochrome c in the IMS and 4 protons from the mitochondrial matrix. The protein is Cytochrome c oxidase subunit 2 (MT-CO2) of Maxomys surifer (Indomalayan maxomys).